We begin with the raw amino-acid sequence, 431 residues long: Adenylosuccinate synthetase (431 aa).

Residues 12 to 18 (GDEGKGK) and 40 to 42 (GHT) contribute to the GTP site. Asp-13 (proton acceptor) is an active-site residue. Residues Asp-13 and Gly-40 each contribute to the Mg(2+) site. IMP is bound by residues 13-16 (DEGK), 38-41 (NAGH), Thr-129, Arg-143, Gln-224, and Thr-239. His-41 (proton donor) is an active-site residue. An Isoglutamyl lysine isopeptide (Lys-Gln) (interchain with Q-Cter in protein Pup) cross-link involves residue Lys-292. 299-305 (VTTGRAR) is a binding site for substrate. Arg-303 lines the IMP pocket. GTP-binding positions include Arg-305, 331–333 (KLD), and 413–415 (GVG).

The protein belongs to the adenylosuccinate synthetase family. In terms of assembly, homodimer. Mg(2+) is required as a cofactor.

The protein localises to the cytoplasm. The catalysed reaction is IMP + L-aspartate + GTP = N(6)-(1,2-dicarboxyethyl)-AMP + GDP + phosphate + 2 H(+). The protein operates within purine metabolism; AMP biosynthesis via de novo pathway; AMP from IMP: step 1/2. In terms of biological role, plays an important role in the de novo pathway of purine nucleotide biosynthesis. Catalyzes the first committed step in the biosynthesis of AMP from IMP. This is Adenylosuccinate synthetase from Mycolicibacterium smegmatis (strain ATCC 700084 / mc(2)155) (Mycobacterium smegmatis).